The chain runs to 622 residues: Pyranose 2-oxidase (622 aa).

A signal peptide spans Met-1–His-28. The propeptide occupies Ser-29–Gly-37. His-167 carries the post-translational modification Tele-8alpha-FAD histidine. Substrate-binding residues include Gln-449 and His-451. His-546 serves as the catalytic Proton acceptor. Asn-591 is a catalytic residue.

Belongs to the GMC oxidoreductase family. In terms of assembly, homotetramer. FAD serves as cofactor. Not glycosylated.

It localises to the periplasm. It carries out the reaction D-glucose + O2 = 2-dehydro-D-glucose + H2O2. Its function is as follows. Catalyzes the oxidation of various aldopyranoses and disaccharides on carbon-2 to the corresponding 2-keto sugars concomitant with the reduction of O(2) to H(2)O(2). Plays an important role in lignin degradation of wood rot fungi by supplying the essential cosubstrate H(2)O(2) for the ligninolytic peroxidases, lignin peroxidase and manganese-dependent peroxidase. The preferred substrate is D-glucose which is converted to 2-dehydro-D-glucose, an intermediate of a secondary metabolic pathway leading to the antibiotic cortalcerone. Also acts on D-xylose, together with D-glucose the major sugars derived from wood, on L-sorbose, D-galactose and 1,5-anhydroglucitol, a diagnostic marker of diabetes mellitus. The chain is Pyranose 2-oxidase (p2ox) from Phlebiopsis gigantea (White-rot fungus).